Here is a 406-residue protein sequence, read N- to C-terminus: Phosphopentomutase (406 aa).

Residues D10, D305, H310, D346, H347, and H358 each contribute to the Mn(2+) site.

The protein belongs to the phosphopentomutase family. The cofactor is Mn(2+).

Its subcellular location is the cytoplasm. It carries out the reaction 2-deoxy-alpha-D-ribose 1-phosphate = 2-deoxy-D-ribose 5-phosphate. The catalysed reaction is alpha-D-ribose 1-phosphate = D-ribose 5-phosphate. It participates in carbohydrate degradation; 2-deoxy-D-ribose 1-phosphate degradation; D-glyceraldehyde 3-phosphate and acetaldehyde from 2-deoxy-alpha-D-ribose 1-phosphate: step 1/2. Functionally, isomerase that catalyzes the conversion of deoxy-ribose 1-phosphate (dRib-1-P) and ribose 1-phosphate (Rib-1-P) to deoxy-ribose 5-phosphate (dRib-5-P) and ribose 5-phosphate (Rib-5-P), respectively. This chain is Phosphopentomutase, found in Rhizobium leguminosarum bv. trifolii (strain WSM2304).